Reading from the N-terminus, the 429-residue chain is Histidine--tRNA ligase (429 aa).

This sequence belongs to the class-II aminoacyl-tRNA synthetase family. As to quaternary structure, homodimer.

It localises to the cytoplasm. The catalysed reaction is tRNA(His) + L-histidine + ATP = L-histidyl-tRNA(His) + AMP + diphosphate + H(+). The sequence is that of Histidine--tRNA ligase from Cyanothece sp. (strain PCC 7425 / ATCC 29141).